The sequence spans 1393 residues: DNA-directed RNA polymerase subunit beta' (1393 aa).

Zn(2+)-binding residues include Cys-71, Cys-73, Cys-86, and Cys-89. Asp-462, Asp-464, and Asp-466 together coordinate Mg(2+). The Zn(2+) site is built by Cys-811, Cys-885, Cys-892, and Cys-895.

It belongs to the RNA polymerase beta' chain family. In terms of assembly, the RNAP catalytic core consists of 2 alpha, 1 beta, 1 beta' and 1 omega subunit. When a sigma factor is associated with the core the holoenzyme is formed, which can initiate transcription. Mg(2+) serves as cofactor. Zn(2+) is required as a cofactor.

It carries out the reaction RNA(n) + a ribonucleoside 5'-triphosphate = RNA(n+1) + diphosphate. Its function is as follows. DNA-dependent RNA polymerase catalyzes the transcription of DNA into RNA using the four ribonucleoside triphosphates as substrates. This Azorhizobium caulinodans (strain ATCC 43989 / DSM 5975 / JCM 20966 / LMG 6465 / NBRC 14845 / NCIMB 13405 / ORS 571) protein is DNA-directed RNA polymerase subunit beta'.